A 354-amino-acid chain; its full sequence is MGCTLSAEDKAAVERSKMIDRNLREDGEKAAREVKLLLLGAGESGKSTIVKQMKIIHEAGYSEEECKQYKAVVYSNTIQSIIAIIRAMGRLKIDFGDPTRADDARQLFVLAGAAEEGFMTADVAGVIKRLWKDSGVQACFNRSREYQLNDSAAYYLNDLDRIAQTSYIPTQQDVLRTRVKTTGIVETHFTFKDLHFKMFDVGGQRSERKKWIHCFEGVTAIIFCVALSDYDLVLAEDEEMNRMHESMKLFDSICNNKWFTDTSIILFLNKKDLFEEKIKRSPLTICYPEYAGSNTYEEAAAYIQCQFEDLNKRKDTKEIYTHFTCATDTKNVQFVFDAVTDVIIKNNLKDCGLF.

The N-myristoyl glycine moiety is linked to residue Gly-2. Cys-3 carries the S-palmitoyl cysteine lipid modification. The region spanning 32-354 (REVKLLLLGA…KNNLKDCGLF (323 aa)) is the G-alpha domain. Positions 35–48 (KLLLLGAGESGKST) are G1 motif. Residues 43–48 (ESGKST), 150–151 (DS), and 175–178 (LRTR) each bind GTP. Ser-47 provides a ligand contact to Mg(2+). Positions 173–181 (DVLRTRVKT) are G2 motif. Residue Thr-181 coordinates Mg(2+). Residues 196–205 (FKMFDVGGQR) are G3 motif. GTP contacts are provided by residues 200–204 (DVGGQ), 269–272 (NKKD), and Ala-326. Residues 265–272 (ILFLNKKD) form a G4 motif region. A G5 motif region spans residues 324–329 (TCATDT).

It belongs to the G-alpha family. G(i/o/t/z) subfamily. In terms of assembly, heterotrimeric G proteins are composed of 3 units; alpha, beta and gamma. The alpha chain contains the guanine nucleotide binding site. Part of a spindle orientation complex. Identified in complex with the beta subunit GNB1 and the gamma subunit GNG1. Identified in complex with the beta subunit GNB1 and the gamma subunit GNG2. GTP binding causes dissociation of the heterotrimer, liberating the individual subunits so that they can interact with downstream effector proteins. Myristoylation at Gly-2 is required for membrane anchoring before palmitoylation. Post-translationally, palmitoylation at Cys-3 varies with membrane lipid composition.

It localises to the nucleus. It is found in the cytoplasm. The protein localises to the cell membrane. The protein resides in the cytoskeleton. Its subcellular location is the microtubule organizing center. It localises to the centrosome. It is found in the cell cortex. The protein localises to the membrane. It catalyses the reaction GTP + H2O = GDP + phosphate + H(+). Guanine nucleotide-binding proteins (G proteins) function as transducers downstream of G protein-coupled receptors (GPCRs) in numerous signaling cascades. The alpha chain contains the guanine nucleotide binding site and alternates between an active, GTP-bound state and an inactive, GDP-bound state. Signaling by an activated GPCR promotes GDP release and GTP binding. The alpha subunit has a low GTPase activity that converts bound GTP to GDP, thereby terminating the signal. Both GDP release and GTP hydrolysis are modulated by numerous regulatory proteins. Signaling is mediated via effector proteins, such as adenylate cyclase. Inhibits adenylate cyclase activity of ADCY1, ADCY5 and ADCY6, leading to decreased intracellular cAMP levels. Required for cortical dynein-dynactin complex recruitment during metaphase. This is Guanine nucleotide-binding protein G(i) subunit alpha-1 (GNAI1) from Gallus gallus (Chicken).